Reading from the N-terminus, the 446-residue chain is Tol-Pal system protein TolB (446 aa).

An N-terminal signal peptide occupies residues 1 to 36 (MMDVQTVRRGNAVQSLMSKLILPLVMAVAFALPARA). A disordered region spans residues 424–446 (GYNERPSPTPTFASDPAWSPRIQ).

It belongs to the TolB family. As to quaternary structure, the Tol-Pal system is composed of five core proteins: the inner membrane proteins TolA, TolQ and TolR, the periplasmic protein TolB and the outer membrane protein Pal. They form a network linking the inner and outer membranes and the peptidoglycan layer.

It is found in the periplasm. Functionally, part of the Tol-Pal system, which plays a role in outer membrane invagination during cell division and is important for maintaining outer membrane integrity. This Parvibaculum lavamentivorans (strain DS-1 / DSM 13023 / NCIMB 13966) protein is Tol-Pal system protein TolB.